We begin with the raw amino-acid sequence, 446 residues long: MKAFEVNFDGLVGPTHNYSGLSYGNVASETNIRDVSNPKEAAKQGLRKMKALHDMGFKQGVLLPQERPDIATLRRLGFTGSDREVLLQAAHQAPVFLGAVASASCMWTANAATVSPSADTTDGRVHFTAANLNAKFHRSIEHPTTTRILQGIFNNDQYFAHHKALPPTSQFGDEGAANHTRFCKNYEDKGVELFVYGRVAFDENAPRPMKYPARQTLEACQAVARLHGLADSSVVYAQQNPAVIDQGVFHNDVIAVGNRNVLFYHEQAFLNTSQMLTELEGKLQGCLLKAVKVSDSEVSVADAVSSYLFNSQLLSLNDDDMMLVVPHECRDNPNVKAYLDDLVTRGGPIKRVEVFDLKQSMKNGGGPACLRLRVALTEAELAAVHPHVMMSDGLFDTLNAWVDKHYRDRISQQDLADPQLLTECRTALDELTQLLQLGSLYPFQLA.

Residues 19 to 28 (SGLSYGNVAS), Asn110, and 137 to 138 (HR) contribute to the substrate site. The active site involves Glu174. Substrate is bound at residue Arg214. His250 is an active-site residue. The substrate site is built by Asp252 and Asn363. Catalysis depends on Cys369, which acts as the Nucleophile.

This sequence belongs to the succinylarginine dihydrolase family. In terms of assembly, homodimer.

It carries out the reaction N(2)-succinyl-L-arginine + 2 H2O + 2 H(+) = N(2)-succinyl-L-ornithine + 2 NH4(+) + CO2. It functions in the pathway amino-acid degradation; L-arginine degradation via AST pathway; L-glutamate and succinate from L-arginine: step 2/5. Catalyzes the hydrolysis of N(2)-succinylarginine into N(2)-succinylornithine, ammonia and CO(2). This chain is N-succinylarginine dihydrolase, found in Hahella chejuensis (strain KCTC 2396).